The chain runs to 208 residues: Thymidylate kinase (208 aa).

ATP is bound at residue 10–17 (GPEGSGKT).

It belongs to the thymidylate kinase family.

It catalyses the reaction dTMP + ATP = dTDP + ADP. Its function is as follows. Phosphorylation of dTMP to form dTDP in both de novo and salvage pathways of dTTP synthesis. This is Thymidylate kinase from Bacillus cereus (strain Q1).